Consider the following 322-residue polypeptide: MNNIGITVYGCEQDEADAFHALSPRFGVMATIINANVSESNAKSAPFNQCISVGHKSEISASILLALKRAGVKYISTRSIGCNHIDTTAAKRMGITVDNVAYSPDSVADYTMMLILMAVRNVKSIVRSVEKHDFRLDSDRGKVLSDMTVGVVGTGQIGKAVIERLRGFGCKVLAYSRSRSIEVNYVPFDELLQNSDIVTLHVPLNTDTHYIISHEQIQRMKQGAFLINTGRGPLVDTYELVKALENGKLGGAALDVLEGEEEFFYSDCTQKPIDNQFLLKLQRMPNVIITPHTAYYTEQALRDTVEKTIKNCLDFERRQEHE.

NAD(+) contacts are provided by residues 156 to 157, 229 to 231, and Asp255; these read QI and TGR. Residue Arg231 is part of the active site. Glu260 is a catalytic residue. The Proton donor role is filled by His292. 292 to 295 contacts NAD(+); that stretch reads HTAY.

The protein belongs to the D-isomer specific 2-hydroxyacid dehydrogenase family.

The catalysed reaction is a (2R)-2-hydroxycarboxylate + NADP(+) = a 2-oxocarboxylate + NADPH + H(+). It catalyses the reaction a (2R)-2-hydroxycarboxylate + NAD(+) = a 2-oxocarboxylate + NADH + H(+). The enzyme catalyses (R)-lactate + NADP(+) = pyruvate + NADPH + H(+). It carries out the reaction (R)-lactate + NAD(+) = pyruvate + NADH + H(+). The catalysed reaction is (2R)-hydroxybutanoate + NADP(+) = 2-oxobutanoate + NADPH + H(+). Its function is as follows. Required for high-level resistance to glycopeptide antibiotics. Catalyzes the reduction of 2-keto acids to 2-D-hydroxy acids, exhibiting highest catalytic efficiency with pyruvate and 2-oxobutanoate/alpha-ketobutyrate as substrates, producing D-lactate and (2R)-hydroxybutanoate, respectively. Together with D-alanine--D-lactate ligase VanA, gives rise to peptidoglycan precursors that terminate in the depsipeptide D-alanine-D-lactate rather than the dipeptide D-alanine-D-alanine thus preventing vancomycin binding. Shows a slight preference for NADPH over NADH as the electron donor. This Enterococcus faecium (Streptococcus faecium) protein is D-specific alpha-keto acid dehydrogenase.